We begin with the raw amino-acid sequence, 409 residues long: Major capsid protein (409 aa).

It belongs to the lambda phage major capsid protein family. In terms of assembly, homomultimer. Interacts with the portal protein. Interacts with the decoration protein.

Its subcellular location is the virion. It localises to the host cytoplasm. Assembles to form an icosahedric capsid shell with a T=7 symmetry although with a diameter of about 82 nm, which is a larger volume than the usual T=7 capsids. A dramatic reconfiguration of the capsid shell that expands the procaspid from a diameter of 66 nm to a supersized capsid of 82 nm, allows packaging of the large viral DNA genome. The capsid decoration protein binds the expanded capsid and stabilizes it. The chain is Major capsid protein from Thermus virus P23-45 (Thermus thermophilus phage P23-45).